Here is a 226-residue protein sequence, read N- to C-terminus: Peroxiredoxin-like 2C (226 aa).

This sequence belongs to the peroxiredoxin-like PRXL2 family. PRXL2C subfamily. Expressed in gastric tissues.

In terms of biological role, may positively regulate ERK1/2 signaling and AKT1 activation leading to HIF1A up-regulation with an increased expression of glycolysis genes and enhanced glycolysis. In Homo sapiens (Human), this protein is Peroxiredoxin-like 2C.